The primary structure comprises 188 residues: Elongation factor P (188 aa).

This sequence belongs to the elongation factor P family.

The protein localises to the cytoplasm. Its pathway is protein biosynthesis; polypeptide chain elongation. Involved in peptide bond synthesis. Stimulates efficient translation and peptide-bond synthesis on native or reconstituted 70S ribosomes in vitro. Probably functions indirectly by altering the affinity of the ribosome for aminoacyl-tRNA, thus increasing their reactivity as acceptors for peptidyl transferase. This chain is Elongation factor P, found in Caulobacter vibrioides (strain ATCC 19089 / CIP 103742 / CB 15) (Caulobacter crescentus).